Consider the following 186-residue polypeptide: Threonylcarbamoyl-AMP synthase (186 aa).

Residues 2–186 enclose the YrdC-like domain; it reads STEFEQAVAA…ARTGAVIRPS (185 aa).

The protein belongs to the SUA5 family. TsaC subfamily.

It is found in the cytoplasm. It carries out the reaction L-threonine + hydrogencarbonate + ATP = L-threonylcarbamoyladenylate + diphosphate + H2O. Required for the formation of a threonylcarbamoyl group on adenosine at position 37 (t(6)A37) in tRNAs that read codons beginning with adenine. Catalyzes the conversion of L-threonine, HCO(3)(-)/CO(2) and ATP to give threonylcarbamoyl-AMP (TC-AMP) as the acyladenylate intermediate, with the release of diphosphate. The protein is Threonylcarbamoyl-AMP synthase of Aeromonas salmonicida (strain A449).